Reading from the N-terminus, the 262-residue chain is Versicolorin reductase 1 (262 aa).

4 residues coordinate NADP(+): I21, D67, N94, and R127. Residues S143 and S144 each act as proton donor in the active site. NADP(+) contacts are provided by Y158, K162, I191, and T193. The Proton acceptor role is filled by Y158. The active-site Lowers pKa of active site Tyr is K162.

It belongs to the short-chain dehydrogenases/reductases (SDR) family.

It localises to the cytoplasm. The protein resides in the cytosol. The enzyme catalyses (4S,8R)-2,13,16,20-tetrahydroxy-7,9-dioxapentacyclo[10.8.0.0(3,10).0(4,8).0(14,19)]icosa-1(12),2,5,10,13,16,19-heptaen-18-one + NADPH + H(+) = (4S,8R,16R)-2,13,16,20-tetrahydroxy-7,9-dioxapentacyclo[10.8.0.0(3,10).0(4,8).0(14,19)]icosa-1(12),2,5,10,13,19-hexaen-18-one + NADP(+). The protein operates within mycotoxin biosynthesis; aflatoxin biosynthesis. Cytochrome P450 monooxygenase; part of the gene cluster that mediates the biosynthesis of aflatoxins, a group of polyketide-derived furanocoumarins, and part of the most toxic and carcinogenic compounds among the known mycotoxins. The four major aflatoxins produced by A.parasiticus are aflatoxin B1 (AFB1), aflatoxin B2 (AFB2), aflatoxin G1 (AFG1) and aflatoxin G2 (AFG2). Within the aflatoxin pathway, with the cytochrome P450 monooxygenase aflN, the versicolorin reductase aflM, is involved in conversion of VERA to demethylsterigmatocystin (DMST). The biosynthesis of aflatoxins begins with the norsolorinic acid synthase aflC that combines a hexanoyl starter unit produced by the fatty acid synthase aflA/aflB and 7 malonyl-CoA extender units to synthesize the precursor NOR. The second step is the conversion of NOR to averantin and requires the norsolorinic acid ketoreductase aflD, which catalyzes the dehydration of norsolorinic acid to form (1'S)-averantin. The norsolorinic acid reductases aflE and aflF may also play a role in the conversion of NOR to AVN. The cytochrome P450 monooxygenase aflG then catalyzes the hydroxylation of AVN to 5'hydroxyaverantin (HAVN). The next step is performed by the 5'-hydroxyaverantin dehydrogenase aflH that transforms HAVN to 5'-oxoaverantin (OAVN) which is further converted to averufin (AVF) by aflK that plays a dual role in the pathway, as a 5'-oxoaverantin cyclase that mediates conversion of 5'-oxoaverantin, as well as a versicolorin B synthase in a later step in the pathway. The averufin oxidase aflI catalyzes the conversion of AVF to versiconal hemiacetal acetate (VHA). VHA is then the substrate for the versiconal hemiacetal acetate esterase aflJ to yield versiconal (VAL). Versicolorin B synthase aflK then converts VAL to versicolorin B (VERB) by closing the bisfuran ring of aflatoxin which is required for DNA-binding, thus giving to aflatoxin its activity as a mutagen. Then, the activity of the versicolorin B desaturase aflL leads to versicolorin A (VERA). A branch point starts from VERB since it can also be converted to dihydrodemethylsterigmatocystin (DMDHST), probably also by aflL, VERA being a precursor for aflatoxins B1 and G1, and DMDHST for aflatoxins B2 and G2. Next, the versicolorin reductase aflM and the cytochrome P450 monooxygenase aflN are involved in conversion of VERA to demethylsterigmatocystin (DMST). AflX and aflY seem also involved in this step, through probable aflX-mediated epoxide ring-opening step following versicolorin A oxidation and aflY-mediated Baeyer-Villiger oxidation required for the formation of the xanthone ring. The methyltransferase aflO then leads to the modification of DMST to sterigmatocystin (ST), and of DMDHST to dihydrosterigmatocystin (DHST). Both ST and DHST are then substrates of the O-methyltransferase aflP to yield O-methylsterigmatocystin (OMST) and dihydro-O-methylsterigmatocystin (DHOMST), respectively. Finally OMST is converted to aflatoxins B1 and G1, and DHOMST to aflatoxins B2 and G2, via the action of several enzymes including O-methylsterigmatocystin oxidoreductase aflQ, the cytochrome P450 monooxygenase aflU, but also the NADH-dependent flavin oxidoreductase nadA which is specifically required for the synthesis of AFG1. This Aspergillus parasiticus (strain ATCC 56775 / NRRL 5862 / SRRC 143 / SU-1) protein is Versicolorin reductase 1.